The following is a 183-amino-acid chain: Adenine phosphoribosyltransferase (183 aa).

This sequence belongs to the purine/pyrimidine phosphoribosyltransferase family. In terms of assembly, homodimer.

Its subcellular location is the cytoplasm. The enzyme catalyses AMP + diphosphate = 5-phospho-alpha-D-ribose 1-diphosphate + adenine. Its pathway is purine metabolism; AMP biosynthesis via salvage pathway; AMP from adenine: step 1/1. In terms of biological role, catalyzes a salvage reaction resulting in the formation of AMP, that is energically less costly than de novo synthesis. In Klebsiella pneumoniae (strain 342), this protein is Adenine phosphoribosyltransferase.